The chain runs to 381 residues: 5-amino-6-(D-ribitylamino)uracil--L-tyrosine 4-hydroxyphenyl transferase (381 aa).

The 248-residue stretch at 59–306 folds into the Radical SAM core domain; sequence VTYVVNRNIN…TAVARIFLGN (248 aa). Positions 73, 77, and 80 each coordinate [4Fe-4S] cluster.

The protein belongs to the radical SAM superfamily. CofH family. Consists of two subunits, CofG and CofH. It depends on [4Fe-4S] cluster as a cofactor.

It carries out the reaction 5-amino-6-(D-ribitylamino)uracil + L-tyrosine + S-adenosyl-L-methionine = 5-amino-5-(4-hydroxybenzyl)-6-(D-ribitylimino)-5,6-dihydrouracil + 2-iminoacetate + 5'-deoxyadenosine + L-methionine + H(+). Its pathway is cofactor biosynthesis; coenzyme F0 biosynthesis. In terms of biological role, catalyzes the radical-mediated synthesis of 5-amino-5-(4-hydroxybenzyl)-6-(D-ribitylimino)-5,6-dihydrouracil from 5-amino-6-(D-ribitylamino)uracil and L-tyrosine. The sequence is that of 5-amino-6-(D-ribitylamino)uracil--L-tyrosine 4-hydroxyphenyl transferase from Cyanothece sp. (strain PCC 7425 / ATCC 29141).